The following is a 654-amino-acid chain: MSLIHRRLYRISGLSSVNAWNLQIREAVNRNDPVESLLLFREMKRGGFEPNNFTFPFVAKACARLADVGCCEMVHAHLIKSPFWSDVFVGTATVDMFVKCNSVDYAAKVFERMPERDATTWNAMLSGFCQSGHTDKAFSLFREMRLNEITPDSVTVMTLIQSASFEKSLKLLEAMHAVGIRLGVDVQVTVANTWISTYGKCGDLDSAKLVFEAIDRGDRTVVSWNSMFKAYSVFGEAFDAFGLYCLMLREEFKPDLSTFINLAASCQNPETLTQGRLIHSHAIHLGTDQDIEAINTFISMYSKSEDTCSARLLFDIMTSRTCVSWTVMISGYAEKGDMDEALALFHAMIKSGEKPDLVTLLSLISGCGKFGSLETGKWIDARADIYGCKRDNVMICNALIDMYSKCGSIHEARDIFDNTPEKTVVTWTTMIAGYALNGIFLEALKLFSKMIDLDYKPNHITFLAVLQACAHSGSLEKGWEYFHIMKQVYNISPGLDHYSCMVDLLGRKGKLEEALELIRNMSAKPDAGIWGALLNACKIHRNVKIAEQAAESLFNLEPQMAAPYVEMANIYAAAGMWDGFARIRSIMKQRNIKKYPGESVIQVNGKNHSFTVGEHGHVENEVIYFTLNGLSLFAKDKHVLYKDVYKEQSYELFI.

A mitochondrion-targeting transit peptide spans 1-65 (MSLIHRRLYR…PFVAKACARL (65 aa)). 13 PPR repeats span residues 86 to 116 (DVFVGTATVDMFVKCNSVDYAAKVFERMPER), 117 to 151 (DATTWNAMLSGFCQSGHTDKAFSLFREMRLNEITP), 152 to 186 (DSVTVMTLIQSASFEKSLKLLEAMHAVGIRLGVDV), 187 to 217 (QVTVANTWISTYGKCGDLDSAKLVFEAIDRG), 220 to 254 (TVVSWNSMFKAYSVFGEAFDAFGLYCLMLREEFKP), 255 to 289 (DLSTFINLAASCQNPETLTQGRLIHSHAIHLGTDQ), 290 to 320 (DIEAINTFISMYSKSEDTCSARLLFDIMTSR), 321 to 355 (TCVSWTVMISGYAEKGDMDEALALFHAMIKSGEKP), 356 to 390 (DLVTLLSLISGCGKFGSLETGKWIDARADIYGCKR), 392 to 422 (NVMICNALIDMYSKCGSIHEARDIFDNTPEK), 423 to 457 (TVVTWTTMIAGYALNGIFLEALKLFSKMIDLDYKP), 458 to 488 (NHITFLAVLQACAHSGSLEKGWEYFHIMKQV), and 494 to 524 (GLDHYSCMVDLLGRKGKLEEALELIRNMSAK). The type E motif stretch occupies residues 529–604 (IWGALLNACK…YPGESVIQVN (76 aa)). The interval 605 to 635 (GKNHSFTVGEHGHVENEVIYFTLNGLSLFAK) is type E(+) motif.

It belongs to the PPR family. PCMP-E subfamily.

It is found in the mitochondrion. The sequence is that of Pentatricopeptide repeat-containing protein At4g19191, mitochondrial (PCMP-E1) from Arabidopsis thaliana (Mouse-ear cress).